A 226-amino-acid chain; its full sequence is Lipoprotein-releasing system ATP-binding protein LolD (226 aa).

The ABC transporter domain occupies 6–226 (VLISGLTKTF…KLYKGNLEEV (221 aa)). An ATP-binding site is contributed by 42–49 (GESGSGKS).

It belongs to the ABC transporter superfamily. Lipoprotein translocase (TC 3.A.1.125) family. In terms of assembly, the complex is composed of two ATP-binding proteins (LolD) and two transmembrane proteins (LolC and LolE).

The protein localises to the cell inner membrane. Functionally, part of the ABC transporter complex LolCDE involved in the translocation of mature outer membrane-directed lipoproteins, from the inner membrane to the periplasmic chaperone, LolA. Responsible for the formation of the LolA-lipoprotein complex in an ATP-dependent manner. This is Lipoprotein-releasing system ATP-binding protein LolD from Treponema denticola (strain ATCC 35405 / DSM 14222 / CIP 103919 / JCM 8153 / KCTC 15104).